A 449-amino-acid polypeptide reads, in one-letter code: N-succinylarginine dihydrolase (449 aa).

Residues Gly-19–Ser-28, Asn-110, and His-137–Arg-138 each bind substrate. Residues Tyr-23–Arg-43 are disordered. The segment covering Ala-27–Asn-37 has biased composition (low complexity). Residue Glu-174 is part of the active site. Arg-214 contacts substrate. The active site involves His-250. Positions 252 and 365 each coordinate substrate. Catalysis depends on Cys-371, which acts as the Nucleophile.

The protein belongs to the succinylarginine dihydrolase family. In terms of assembly, homodimer.

The enzyme catalyses N(2)-succinyl-L-arginine + 2 H2O + 2 H(+) = N(2)-succinyl-L-ornithine + 2 NH4(+) + CO2. Its pathway is amino-acid degradation; L-arginine degradation via AST pathway; L-glutamate and succinate from L-arginine: step 2/5. In terms of biological role, catalyzes the hydrolysis of N(2)-succinylarginine into N(2)-succinylornithine, ammonia and CO(2). The sequence is that of N-succinylarginine dihydrolase from Pseudomonas putida (strain ATCC 700007 / DSM 6899 / JCM 31910 / BCRC 17059 / LMG 24140 / F1).